A 204-amino-acid chain; its full sequence is uncharacterized protein (204 aa).

An N-terminal signal peptide occupies residues 1 to 17 (MKRLVTGLLALSLFLAA). The tract at residues 17-102 (ACGQDSDQQK…NQSSNNQKSS (86 aa)) is disordered. The N-palmitoyl cysteine moiety is linked to residue cysteine 18. The S-diacylglycerol cysteine moiety is linked to residue cysteine 18. Residues 23–70 (DQQKDSNKEKDDKAKTEQQDKKTNDSSKDKKDNKDDSKDVNKDNKDNS) are compositionally biased toward basic and acidic residues. Positions 71 to 102 (ANDNQQQSNSNATNNDQNQTNNNQSSNNQKSS) are enriched in low complexity.

The protein localises to the cell membrane. This is an uncharacterized protein from Staphylococcus aureus (strain Mu50 / ATCC 700699).